The chain runs to 92 residues: DNA/RNA-binding protein Alba (92 aa).

Lys-11 bears the N6-acetyllysine mark.

Belongs to the histone-like Alba family. Post-translationally, acetylated. Acetylation at Lys-11 decreases DNA-binding affinity.

The protein localises to the cytoplasm. The protein resides in the chromosome. Binds double-stranded DNA tightly but without sequence specificity. Involved in DNA compaction. In Pyrobaculum calidifontis (strain DSM 21063 / JCM 11548 / VA1), this protein is DNA/RNA-binding protein Alba.